Reading from the N-terminus, the 405-residue chain is Argininosuccinate synthase (405 aa).

ATP-binding positions include 11 to 19 and Ala38; that span reads AYSGGLDTS. The L-citrulline site is built by Tyr91 and Ser96. Gly121 lines the ATP pocket. L-aspartate-binding residues include Thr123, Asn127, and Asp128. Asn127 contributes to the L-citrulline binding site. L-citrulline is bound by residues Arg131, Ser181, Ser190, Glu266, and Tyr278.

Belongs to the argininosuccinate synthase family. Type 1 subfamily. Homotetramer.

It localises to the cytoplasm. It carries out the reaction L-citrulline + L-aspartate + ATP = 2-(N(omega)-L-arginino)succinate + AMP + diphosphate + H(+). The protein operates within amino-acid biosynthesis; L-arginine biosynthesis; L-arginine from L-ornithine and carbamoyl phosphate: step 2/3. This is Argininosuccinate synthase from Nitratiruptor sp. (strain SB155-2).